We begin with the raw amino-acid sequence, 298 residues long: Protease HtpX homolog (298 aa).

A run of 2 helical transmembrane segments spans residues 14 to 34 (VVLL…AGYL) and 39 to 59 (YAMG…SMIF). Position 143 (His-143) interacts with Zn(2+). Glu-144 is an active-site residue. Residue His-147 coordinates Zn(2+). The next 2 membrane-spanning stretches (helical) occupy residues 158-178 (IAVA…RMLW) and 197-217 (IITL…ASLI). Residue Glu-226 coordinates Zn(2+).

This sequence belongs to the peptidase M48B family. Requires Zn(2+) as cofactor.

The protein resides in the cell membrane. The sequence is that of Protease HtpX homolog from Streptococcus pyogenes serotype M49 (strain NZ131).